The chain runs to 455 residues: L-serine dehydratase 2 (455 aa).

This sequence belongs to the iron-sulfur dependent L-serine dehydratase family. It depends on [4Fe-4S] cluster as a cofactor. In terms of processing, activated by post-translational modification by a system involving at least three gene products. Activation is mimicked in vitro by iron and dithiothreitol. There is considerable evidence for a free-radical activation mechanism.

The catalysed reaction is L-serine = pyruvate + NH4(+). The protein operates within carbohydrate biosynthesis; gluconeogenesis. Its function is as follows. Also deaminates threonine, particularly when it is present in high concentration. The polypeptide is L-serine dehydratase 2 (sdaB) (Escherichia coli (strain K12)).